Here is a 646-residue protein sequence, read N- to C-terminus: Tyrosine-protein kinase MasK (646 aa).

At 1–415 (MSPPQTTLPV…PTAGGRRWRT (415 aa)) the chain is on the periplasmic side. One can recognise a Protein kinase domain in the interval 25–300 (YVLVRKLAEG…AFADALETFL (276 aa)). ATP contacts are provided by residues 31–39 (LAEGGMAEI) and lysine 57. Aspartate 163 functions as the Proton acceptor in the catalytic mechanism. The interval 373–410 (TSAQRPGMSMRPSSPGVPAHGAASRGSTSPESAPTAGG) is disordered. The chain crosses the membrane as a helical span at residues 416–433 (LAVGLAGGLMLAAAGIVG). Residues 434-646 (YRQWMTTPAS…VMPFSWRVTQ (213 aa)) are Cytoplasmic-facing. Residues 521–547 (AGAASDVEAEADEEGADAAPVRSKKAS) form a disordered region. The segment covering 527 to 536 (VEAEADEEGA) has biased composition (acidic residues).

Belongs to the protein kinase superfamily. Tyr protein kinase family. As to quaternary structure, interacts with MglA. Autophosphorylated.

It is found in the cell inner membrane. It carries out the reaction L-tyrosyl-[protein] + ATP = O-phospho-L-tyrosyl-[protein] + ADP + H(+). Essential for growth. Interacts with MglA to control social gliding motility. This Myxococcus xanthus (strain DK1622) protein is Tyrosine-protein kinase MasK (masK).